Consider the following 345-residue polypeptide: Ferrochelatase (345 aa).

The Fe cation site is built by H215 and E296.

The protein belongs to the ferrochelatase family.

It localises to the cytoplasm. The catalysed reaction is heme b + 2 H(+) = protoporphyrin IX + Fe(2+). Its pathway is porphyrin-containing compound metabolism; protoheme biosynthesis; protoheme from protoporphyrin-IX: step 1/1. In terms of biological role, catalyzes the ferrous insertion into protoporphyrin IX. Essential for normal nodule development. The chain is Ferrochelatase from Bradyrhizobium diazoefficiens (strain JCM 10833 / BCRC 13528 / IAM 13628 / NBRC 14792 / USDA 110).